Reading from the N-terminus, the 334-residue chain is Transaldolase (334 aa).

Lys-136 acts as the Schiff-base intermediate with substrate in catalysis.

This sequence belongs to the transaldolase family. Type 1 subfamily. As to quaternary structure, homodimer.

Its subcellular location is the cytoplasm. The catalysed reaction is D-sedoheptulose 7-phosphate + D-glyceraldehyde 3-phosphate = D-erythrose 4-phosphate + beta-D-fructose 6-phosphate. It participates in carbohydrate degradation; pentose phosphate pathway; D-glyceraldehyde 3-phosphate and beta-D-fructose 6-phosphate from D-ribose 5-phosphate and D-xylulose 5-phosphate (non-oxidative stage): step 2/3. Functionally, transaldolase is important for the balance of metabolites in the pentose-phosphate pathway. The sequence is that of Transaldolase from Nostoc punctiforme (strain ATCC 29133 / PCC 73102).